Reading from the N-terminus, the 239-residue chain is Uridylate kinase (239 aa).

Residue lysine 13–glycine 16 coordinates ATP. Glycine 55 provides a ligand contact to UMP. ATP contacts are provided by glycine 56 and arginine 60. UMP-binding positions include aspartate 75 and leucine 136 to threonine 143. ATP is bound by residues threonine 163, tyrosine 169, and aspartate 172.

This sequence belongs to the UMP kinase family. As to quaternary structure, homohexamer.

Its subcellular location is the cytoplasm. The enzyme catalyses UMP + ATP = UDP + ADP. It participates in pyrimidine metabolism; CTP biosynthesis via de novo pathway; UDP from UMP (UMPK route): step 1/1. With respect to regulation, inhibited by UTP. Functionally, catalyzes the reversible phosphorylation of UMP to UDP. The sequence is that of Uridylate kinase from Buchnera aphidicola subsp. Cinara cedri (strain Cc).